A 928-amino-acid chain; its full sequence is DNA ligase 4 (928 aa).

The ATP site is built by glutamate 302, lysine 304, arginine 309, glutamate 362, phenylalanine 409, glutamate 469, lysine 474, lysine 492, and lysine 494. The active-site N6-AMP-lysine intermediate is lysine 304. Glutamate 362 contacts Mg(2+). A Mg(2+)-binding site is contributed by glutamate 469. 2 BRCT domains span residues valine 673 to isoleucine 769 and proline 821 to phenylalanine 927.

It belongs to the ATP-dependent DNA ligase family. Mg(2+) is required as a cofactor.

It is found in the nucleus. The enzyme catalyses ATP + (deoxyribonucleotide)n-3'-hydroxyl + 5'-phospho-(deoxyribonucleotide)m = (deoxyribonucleotide)n+m + AMP + diphosphate.. Its function is as follows. DNA ligase involved in DNA non-homologous end joining (NHEJ); required for double-strand break (DSB) repair. Not required for the repair of DSBs induced by ionizing radiation or UV light. Has an important role in morphogenesis, positively affecting the capacity to form hyphae. The sequence is that of DNA ligase 4 (LIG4) from Candida albicans (strain SC5314 / ATCC MYA-2876) (Yeast).